The chain runs to 199 residues: ATP synthase subunit a (199 aa).

Transmembrane regions (helical) follow at residues 2 to 22 (NQVY…LFYF), 53 to 73 (VISV…YFTY), 80 to 100 (MVEF…LTFI), 141 to 161 (LTVN…GLEL), and 169 to 189 (WLSI…SYIF).

The protein belongs to the ATPase A chain family. In terms of assembly, F-type ATPases have 2 components, CF(1) - the catalytic core - and CF(0) - the membrane proton channel. CF(1) has five subunits: alpha(3), beta(3), gamma(1), delta(1), epsilon(1). CF(0) has three main subunits: a, b and c.

The protein localises to the mitochondrion inner membrane. Mitochondrial membrane ATP synthase (F(1)F(0) ATP synthase or Complex V) produces ATP from ADP in the presence of a proton gradient across the membrane which is generated by electron transport complexes of the respiratory chain. F-type ATPases consist of two structural domains, F(1) - containing the extramembraneous catalytic core and F(0) - containing the membrane proton channel, linked together by a central stalk and a peripheral stalk. During catalysis, ATP synthesis in the catalytic domain of F(1) is coupled via a rotary mechanism of the central stalk subunits to proton translocation. Key component of the proton channel; it may play a direct role in the translocation of protons across the membrane. The chain is ATP synthase subunit a (atp6) from Caenorhabditis briggsae.